Consider the following 503-residue polypeptide: Aromatase 2 (503 aa).

C437 is a heme binding site.

It belongs to the cytochrome P450 family. Requires heme as cofactor.

The protein resides in the membrane. It catalyses the reaction testosterone + 3 reduced [NADPH--hemoprotein reductase] + 3 O2 = 17beta-estradiol + formate + 3 oxidized [NADPH--hemoprotein reductase] + 4 H2O + 4 H(+). The enzyme catalyses androst-4-ene-3,17-dione + 3 reduced [NADPH--hemoprotein reductase] + 3 O2 = estrone + formate + 3 oxidized [NADPH--hemoprotein reductase] + 4 H2O + 4 H(+). Catalyzes the formation of aromatic C18 estrogens from C19 androgens. The chain is Aromatase 2 (CYP19A2) from Sus scrofa (Pig).